The primary structure comprises 103 residues: UPF0235 protein Rleg2_3707 (103 aa).

The protein belongs to the UPF0235 family.

This chain is UPF0235 protein Rleg2_3707, found in Rhizobium leguminosarum bv. trifolii (strain WSM2304).